The primary structure comprises 449 residues: G-protein coupled receptor 61 (449 aa).

Positions 1–14 (MESSPIPQSSGNSS) are enriched in low complexity. The interval 1–29 (MESSPIPQSSGNSSTLGRALQTPGPSTAS) is disordered. At 1-44 (MESSPIPQSSGNSSTLGRALQTPGPSTASGVPELGLRDVASESV) the chain is on the extracellular side. N12 carries an N-linked (GlcNAc...) asparagine glycan. The chain crosses the membrane as a helical span at residues 45–67 (ALFFMLLLDLTAVAGNAAVMAVI). Over 68–75 (AKTPALRK) the chain is Cytoplasmic. A helical membrane pass occupies residues 76-98 (FVFVFHLCLVDLLAALTLMPLAM). Topologically, residues 99 to 112 (LSSSALFDHALFGE) are extracellular. A helical transmembrane segment spans residues 113–135 (VACRLYLFLSVCFVSLAILSVSA). Residues 136–155 (INVERYYYVVHPMRYEVRMT) lie on the Cytoplasmic side of the membrane. Residues 156 to 178 (LGLVASVLVGVWVKALAMASVPV) traverse the membrane as a helical segment. The Extracellular segment spans residues 179-206 (LGRVYWEEGAPSVNPGCSLQWSHSAYCQ). The chain crosses the membrane as a helical span at residues 207–229 (LFVVVFAVLYFLLPLILIFVVYC). Residues 230-287 (SMFRVARVAAMQHGPLPTWMETPRQRSESLSSRSTMVTSSGAHQTTPHRTFGGGKAAV) lie on the Cytoplasmic side of the membrane. The helical transmembrane segment at 288-310 (VLLAVGGQFLLCWLPYFSFHLYV) threads the bilayer. Topologically, residues 311 to 324 (ALSAQPISAGQVEN) are extracellular. A helical membrane pass occupies residues 325–344 (VVTWIGYFCFTSNPFFYGCL). Over 345-449 (NRQIRGELSK…RPAPSPRLES (105 aa)) the chain is Cytoplasmic.

The protein belongs to the G-protein coupled receptor 1 family. As to quaternary structure, forms heterodimer with MTNR1B. Interacts with ARRB1 and ARRB2 in a spontaneous and agonist-independent manner; leading to the internalization of GPR61 in the endosomal compartment. As to expression, predominantly expressed in the brain and testes, with relatively lower expression observed in the eye, adrenal gland and pituitary gland.

The protein resides in the cell membrane. It is found in the endosome membrane. In terms of biological role, orphan G-protein coupled receptor. Constitutively activates the G(s)-alpha/cAMP signaling pathway. Shows a reciprocal regulatory interaction with the melatonin receptor MTNR1B most likely through receptor heteromerization. May be involved in the regulation of food intake and body weight. This is G-protein coupled receptor 61 (Gpr61) from Mus musculus (Mouse).